Reading from the N-terminus, the 421-residue chain is UDP-N-acetylglucosamine 1-carboxyvinyltransferase (421 aa).

22 to 23 (KN) contributes to the phosphoenolpyruvate binding site. Residue Arg-95 participates in UDP-N-acetyl-alpha-D-glucosamine binding. The active-site Proton donor is Cys-119. 2-(S-cysteinyl)pyruvic acid O-phosphothioketal is present on Cys-119. UDP-N-acetyl-alpha-D-glucosamine is bound by residues 124–128 (RPVDQ), Asp-309, and Ile-331.

It belongs to the EPSP synthase family. MurA subfamily.

It localises to the cytoplasm. It catalyses the reaction phosphoenolpyruvate + UDP-N-acetyl-alpha-D-glucosamine = UDP-N-acetyl-3-O-(1-carboxyvinyl)-alpha-D-glucosamine + phosphate. Its pathway is cell wall biogenesis; peptidoglycan biosynthesis. Functionally, cell wall formation. Adds enolpyruvyl to UDP-N-acetylglucosamine. This chain is UDP-N-acetylglucosamine 1-carboxyvinyltransferase, found in Leptothrix cholodnii (strain ATCC 51168 / LMG 8142 / SP-6) (Leptothrix discophora (strain SP-6)).